A 222-amino-acid polypeptide reads, in one-letter code: Large ribosomal subunit protein uL4 (222 aa).

The interval alanine 42–arginine 100 is disordered. The segment covering glycine 60–glycine 71 has biased composition (basic residues).

It belongs to the universal ribosomal protein uL4 family. As to quaternary structure, part of the 50S ribosomal subunit.

Its function is as follows. One of the primary rRNA binding proteins, this protein initially binds near the 5'-end of the 23S rRNA. It is important during the early stages of 50S assembly. It makes multiple contacts with different domains of the 23S rRNA in the assembled 50S subunit and ribosome. In terms of biological role, forms part of the polypeptide exit tunnel. The chain is Large ribosomal subunit protein uL4 from Thermobifida fusca (strain YX).